The chain runs to 422 residues: Enolase (422 aa).

Q162 contributes to the (2R)-2-phosphoglycerate binding site. The active-site Proton donor is the E204. Residues D241, E285, and D312 each coordinate Mg(2+). (2R)-2-phosphoglycerate is bound by residues K337, R366, S367, and K388. The active-site Proton acceptor is the K337.

It belongs to the enolase family. The cofactor is Mg(2+).

Its subcellular location is the cytoplasm. The protein resides in the secreted. It localises to the cell surface. The enzyme catalyses (2R)-2-phosphoglycerate = phosphoenolpyruvate + H2O. It participates in carbohydrate degradation; glycolysis; pyruvate from D-glyceraldehyde 3-phosphate: step 4/5. In terms of biological role, catalyzes the reversible conversion of 2-phosphoglycerate (2-PG) into phosphoenolpyruvate (PEP). It is essential for the degradation of carbohydrates via glycolysis. The polypeptide is Enolase (Wolinella succinogenes (strain ATCC 29543 / DSM 1740 / CCUG 13145 / JCM 31913 / LMG 7466 / NCTC 11488 / FDC 602W) (Vibrio succinogenes)).